The sequence spans 681 residues: U3 small nucleolar ribonucleoprotein protein MPP10 (681 aa).

Phosphoserine occurs at positions 61, 120, and 140. A coiled-coil region spans residues glutamate 109–leucine 139. Positions glutamate 111–glycine 144 are enriched in acidic residues. 3 disordered regions span residues glutamate 111 to aspartate 202, leucine 215 to lysine 256, and tyrosine 268 to glutamine 365. The span at aspartate 145 to lysine 163 shows a compositional bias: basic and acidic residues. Serine 164, serine 168, and serine 172 each carry phosphoserine. A compositionally biased stretch (basic and acidic residues) spans leucine 215–aspartate 227. Acidic residues-rich tracts occupy residues glycine 228–glutamate 248 and aspartate 273–asparagine 322. Residues serine 244, serine 247, serine 277, and serine 346 each carry the phosphoserine modification. Positions alanine 349–lysine 383 form a coiled coil. Lysine 351 participates in a covalent cross-link: Glycyl lysine isopeptide (Lys-Gly) (interchain with G-Cter in SUMO2). Over residues glutamine 352–glutamine 365 the composition is skewed to basic and acidic residues. Glycyl lysine isopeptide (Lys-Gly) (interchain with G-Cter in SUMO2) cross-links involve residues lysine 383 and lysine 395. Residues alanine 471–asparagine 491 are a coiled coil. Lysine 556 is covalently cross-linked (Glycyl lysine isopeptide (Lys-Gly) (interchain with G-Cter in SUMO2)). Over residues lysine 560–lysine 576 the composition is skewed to basic and acidic residues. The interval lysine 560–glutamine 644 is disordered. Residues lysine 575 to asparagine 604 adopt a coiled-coil conformation. The segment covering arginine 577–leucine 599 has biased composition (basic residues). At lysine 609 the chain carries N6-acetyllysine. Positions leucine 630–leucine 640 are enriched in basic and acidic residues. Glycyl lysine isopeptide (Lys-Gly) (interchain with G-Cter in SUMO2) cross-links involve residues lysine 632 and lysine 649. Positions glutamine 657 to leucine 681 are disordered. Positions lysine 662–leucine 681 are enriched in basic and acidic residues.

The protein belongs to the MPP10 family. As to quaternary structure, part of the small subunit (SSU) processome, composed of more than 70 proteins and the RNA chaperone small nucleolar RNA (snoRNA) U3. Component of a heterotrimeric complex containing IMP3, IMP4 and MPHOSPH10. Interacts with IMP3 and IMP4. Post-translationally, phosphorylated in M (mitotic) phase.

The protein localises to the nucleus. It is found in the nucleolus. It localises to the chromosome. Functionally, component of the 60-80S U3 small nucleolar ribonucleoprotein (U3 snoRNP). Required for the early cleavages during pre-18S ribosomal RNA processing. Part of the small subunit (SSU) processome, first precursor of the small eukaryotic ribosomal subunit. During the assembly of the SSU processome in the nucleolus, many ribosome biogenesis factors, an RNA chaperone and ribosomal proteins associate with the nascent pre-rRNA and work in concert to generate RNA folding, modifications, rearrangements and cleavage as well as targeted degradation of pre-ribosomal RNA by the RNA exosome. In Mus musculus (Mouse), this protein is U3 small nucleolar ribonucleoprotein protein MPP10 (Mphosph10).